The chain runs to 348 residues: Anthranilate phosphoribosyltransferase (348 aa).

5-phospho-alpha-D-ribose 1-diphosphate-binding positions include G81, 84 to 85 (GD), T89, 91 to 94 (NIST), 109 to 117 (KHGNRSSSG), and S121. Position 81 (G81) interacts with anthranilate. Mg(2+) is bound at residue S93. N112 serves as a coordination point for anthranilate. Residue R167 coordinates anthranilate. The Mg(2+) site is built by D226 and E227.

Belongs to the anthranilate phosphoribosyltransferase family. Homodimer. It depends on Mg(2+) as a cofactor.

The catalysed reaction is N-(5-phospho-beta-D-ribosyl)anthranilate + diphosphate = 5-phospho-alpha-D-ribose 1-diphosphate + anthranilate. Its pathway is amino-acid biosynthesis; L-tryptophan biosynthesis; L-tryptophan from chorismate: step 2/5. Functionally, catalyzes the transfer of the phosphoribosyl group of 5-phosphorylribose-1-pyrophosphate (PRPP) to anthranilate to yield N-(5'-phosphoribosyl)-anthranilate (PRA). The polypeptide is Anthranilate phosphoribosyltransferase (Nitrosopumilus maritimus (strain SCM1)).